The chain runs to 374 residues: Speckle-type POZ protein A (374 aa).

Residues 31-161 (KFSYMWTINN…DDKLTLFCEV (131 aa)) enclose the MATH domain. The segment at 71–191 (VNPKGLDEES…PECRLADELG (121 aa)) is required for nuclear localization. The 125-residue stretch at 173–297 (QNTMNMVKVP…MCEEALCSNL (125 aa)) folds into the BTB domain. The homodimerization stretch occupies residues 297–355 (LSVENAAEILILADLHSADQLKTQAVDFINYHASDVMETSGWKSMVVSHPHLVAEAYRS).

It belongs to the Tdpoz family. Homodimer. Part of cullin-RING-based BCR (BTB-CUL3-RBX1) E3 ubiquitin-protein ligase complexes that contain CUL3 and SPOP, plus a target protein.

Its subcellular location is the nucleus. It is found in the nucleus speckle. Its pathway is protein modification; protein ubiquitination. Functionally, component of a cullin-RING-based BCR (BTB-CUL3-RBX1) E3 ubiquitin-protein ligase complex that mediates the ubiquitination of target proteins, leading most often to their proteasomal degradation. The chain is Speckle-type POZ protein A (spop-a) from Xenopus laevis (African clawed frog).